Here is a 271-residue protein sequence, read N- to C-terminus: Repressed by EFG1 protein 1 (271 aa).

The first 19 residues, 1-19 (MKITNTLLNAAALLAVTEA), serve as a signal peptide directing secretion. The disordered stretch occupies residues 59-118 (QLTSKTQDSTSPTTSSVNSLTSSSATSYVETTTPAPSSSTLTTSTISSSTASEDSDATPT). Residues 67-118 (STSPTTSSVNSLTSSSATSYVETTTPAPSSSTLTTSTISSSTASEDSDATPT) show a composition bias toward low complexity. In terms of domain architecture, SCP spans 128–244 (LKEHNVKRAL…AWRQITVCEY (117 aa)). A glycan (N-linked (GlcNAc...) asparagine) is linked at N254.

This sequence belongs to the CRISP family.

The protein localises to the secreted. Its subcellular location is the cell wall. Functionally, cell wall protein involved in cell wall integrity and which plays a role in virulence. The chain is Repressed by EFG1 protein 1 (RBE1) from Candida albicans (strain SC5314 / ATCC MYA-2876) (Yeast).